The primary structure comprises 237 residues: Listeriolysin regulatory protein (237 aa).

The HTH crp-type domain occupies 137–212 (NGKLGSICGQ…NSCFYVQNLD (76 aa)).

Its function is as follows. Positively regulates expression of listeriolysin, of 1-phosphadidylinositol phosphodiesterase (PI-PLC) and other virulence factors. This Listeria monocytogenes serovar 1/2a (strain ATCC BAA-679 / EGD-e) protein is Listeriolysin regulatory protein (prfA).